Here is a 306-residue protein sequence, read N- to C-terminus: Protein-L-isoaspartate O-methyltransferase 2 (306 aa).

The disordered stretch occupies residues 1 to 82; it reads MSTTPPRNKF…ASAATAGGGG (82 aa). The span at 38-48 shows a compositional bias: pro residues; the sequence is PAAPTPAPAKP. Low complexity predominate over residues 54-77; sequence PRTAAPAPAPVPASAVEQRASAAT. The active site involves serine 142.

Belongs to the methyltransferase superfamily. L-isoaspartyl/D-aspartyl protein methyltransferase family.

The protein localises to the cytoplasm. It catalyses the reaction [protein]-L-isoaspartate + S-adenosyl-L-methionine = [protein]-L-isoaspartate alpha-methyl ester + S-adenosyl-L-homocysteine. In terms of biological role, catalyzes the methyl esterification of L-isoaspartyl residues in peptides and proteins that result from spontaneous decomposition of normal L-aspartyl and L-asparaginyl residues. It plays a role in the repair and/or degradation of damaged proteins. This is Protein-L-isoaspartate O-methyltransferase 2 from Cupriavidus necator (strain ATCC 17699 / DSM 428 / KCTC 22496 / NCIMB 10442 / H16 / Stanier 337) (Ralstonia eutropha).